A 425-amino-acid polypeptide reads, in one-letter code: MRDKISESTRNIFDTVWKRIFPFHEMILSRPAVLSYSGGKDSSLLLHFYFWLWAEKKIPVPCIYHLDHSIRFNLEQEKKILDYTESTFPFPNLFKKKNIPALSQKLGKTLEETGRAFRYKDLEKISNQYEGYIVTGHHSTDYLETVFLNLIRGGGWNSLRTLGWYEKNRFRPLFAFTEDEIKTISQSESWPIFEDESNQSNEYLRNRIRNYILPLLLQEGADPDRIYKNFHRMEKPTSKILLKEVSSHKTPSFLKIDVWVLNDLSERERKFFIDRYLRSLNLHPTTRNFFQDLMDCLKKMNSFGIENKEAWFWKSSSYDLYVIPKNSLCLKKFKLESKNMILKWNGSQKKISPGFIPGLCSPGAKIRKNGMSIEISEILRQKEIPVPVRKMLPILYREGKVDVICLSLWDPRLGDIVADRSRNFI.

Residue 37–42 (SGGKDS) participates in ATP binding.

The protein belongs to the tRNA(Ile)-lysidine synthase family.

The protein localises to the cytoplasm. It catalyses the reaction cytidine(34) in tRNA(Ile2) + L-lysine + ATP = lysidine(34) in tRNA(Ile2) + AMP + diphosphate + H(+). Ligates lysine onto the cytidine present at position 34 of the AUA codon-specific tRNA(Ile) that contains the anticodon CAU, in an ATP-dependent manner. Cytidine is converted to lysidine, thus changing the amino acid specificity of the tRNA from methionine to isoleucine. The polypeptide is tRNA(Ile)-lysidine synthase (Leptospira borgpetersenii serovar Hardjo-bovis (strain JB197)).